The primary structure comprises 181 residues: Nucleoside diphosphate kinase, mitochondrial (181 aa).

A compositionally biased stretch (basic residues) spans 1-10; the sequence is MFRGGTHRLR. Residues 1–22 are disordered; the sequence is MFRGGTHRLRGQPGLSLPHGPR. The N-terminal 24 residues, 1–24, are a transit peptide targeting the mitochondrion; sequence MFRGGTHRLRGQPGLSLPHGPRCY. ATP-binding residues include Lys-40, Phe-88, Arg-116, Thr-122, Arg-133, and Asn-143. His-146 serves as the catalytic Pros-phosphohistidine intermediate.

The protein belongs to the NDK family. The cofactor is Mg(2+). In terms of tissue distribution, highest levels in the liver and kidney with lower levels in the heart, brain and breast muscle.

The protein localises to the mitochondrion intermembrane space. It localises to the mitochondrion matrix. The enzyme catalyses a 2'-deoxyribonucleoside 5'-diphosphate + ATP = a 2'-deoxyribonucleoside 5'-triphosphate + ADP. It carries out the reaction a ribonucleoside 5'-diphosphate + ATP = a ribonucleoside 5'-triphosphate + ADP. Feedback inhibition by ADP. Its function is as follows. Major role in the synthesis of nucleoside triphosphates other than ATP. The ATP gamma phosphate is transferred to the NDP beta phosphate via a ping-pong mechanism, using a phosphorylated active-site intermediate. Through the catalyzed exchange of gamma-phosphate between di- and triphosphonucleosides participates in regulation of intracellular nucleotide homeostasis. Binds to anionic phospholipids, predominantly to cardiolipin; the binding inhibits its phosphotransfer activity. Acts as a mitochondria-specific NDK coupled to respiration. Promotes the redistribution of cardiolipin between the mitochondrial inner membrane and outer membrane which is implicated in pro-apoptotic signaling. The chain is Nucleoside diphosphate kinase, mitochondrial (NME4) from Columba livia (Rock dove).